Consider the following 640-residue polypeptide: Dextranase (640 aa).

Positions 1–32 (MPGTGLGRLAKRMTAAAAVFFISTSAVLPAQA) are cleaved as a signal peptide. The propeptide occupies 33 to 49 (ATAPAAAPPGVPAALKA). Residues 248–269 (EQKERLVPTEESGSIHYPEPGE) form a disordered region.

It belongs to the glycosyl hydrolase 49 family.

The protein resides in the secreted. It catalyses the reaction Endohydrolysis of (1-&gt;6)-alpha-D-glucosidic linkages in dextran.. Functionally, efficiently decomposes water-insoluble glucan as well as dextran. The polypeptide is Dextranase (Arthrobacter sp. (strain CB-8)).